The chain runs to 243 residues: MNQKNPKDTQNFITSKKHVKEILNHTNISKQDNVIEIGSGKGHFTKELVKMSRSVTAIEIDGGLCQVTKEAVNPSENIKVIQTDILKFSFPKHINYKIYGNIPYNISTDIVKRITFESQAKYSYLIVEKGFAKRLQNLQRALGLLLMVEMDIKMLKKVPPLYFHPKPSVDSVLIVLERHQPLISKKDYKKYRSFVYKWVNREYRVLFTKNQFRQALKHANVTNINKLSKEQFLSIFNSYKLFH.

Residues Asn11, Ile13, Gly38, Glu59, Asp84, and Asn101 each coordinate S-adenosyl-L-methionine.

This sequence belongs to the class I-like SAM-binding methyltransferase superfamily. rRNA adenine N(6)-methyltransferase family.

The enzyme catalyses adenosine(2085) in 23S rRNA + 2 S-adenosyl-L-methionine = N(6)-dimethyladenosine(2085) in 23S rRNA + 2 S-adenosyl-L-homocysteine + 2 H(+). Functionally, this protein produces a dimethylation of the adenine residue at position 2085 in 23S rRNA, resulting in reduced affinity between ribosomes and macrolide-lincosamide-streptogramin B antibiotics. This chain is rRNA adenine N-6-methyltransferase (ermA1), found in Staphylococcus aureus (strain Mu50 / ATCC 700699).